Here is a 311-residue protein sequence, read N- to C-terminus: Putative pyruvate, phosphate dikinase regulatory protein (311 aa).

180–187 provides a ligand contact to ADP; that stretch reads GVSRSSKT.

This sequence belongs to the pyruvate, phosphate/water dikinase regulatory protein family. PDRP subfamily.

It catalyses the reaction N(tele)-phospho-L-histidyl/L-threonyl-[pyruvate, phosphate dikinase] + ADP = N(tele)-phospho-L-histidyl/O-phospho-L-threonyl-[pyruvate, phosphate dikinase] + AMP + H(+). The catalysed reaction is N(tele)-phospho-L-histidyl/O-phospho-L-threonyl-[pyruvate, phosphate dikinase] + phosphate + H(+) = N(tele)-phospho-L-histidyl/L-threonyl-[pyruvate, phosphate dikinase] + diphosphate. Bifunctional serine/threonine kinase and phosphorylase involved in the regulation of the pyruvate, phosphate dikinase (PPDK) by catalyzing its phosphorylation/dephosphorylation. In Paramagnetospirillum magneticum (strain ATCC 700264 / AMB-1) (Magnetospirillum magneticum), this protein is Putative pyruvate, phosphate dikinase regulatory protein.